The primary structure comprises 100 residues: Urease subunit gamma (100 aa).

This sequence belongs to the urease gamma subunit family. In terms of assembly, heterotrimer of UreA (gamma), UreB (beta) and UreC (alpha) subunits. Three heterotrimers associate to form the active enzyme.

The protein resides in the cytoplasm. It catalyses the reaction urea + 2 H2O + H(+) = hydrogencarbonate + 2 NH4(+). It functions in the pathway nitrogen metabolism; urea degradation; CO(2) and NH(3) from urea (urease route): step 1/1. This is Urease subunit gamma from Enterobacter sp. (strain 638).